Consider the following 148-residue polypeptide: Large-conductance mechanosensitive channel (148 aa).

The next 2 membrane-spanning stretches (helical) occupy residues 15–35 and 84–104; these read LDMA…KSLV and VGVF…VFLL.

It belongs to the MscL family. In terms of assembly, homopentamer.

It localises to the cell inner membrane. In terms of biological role, channel that opens in response to stretch forces in the membrane lipid bilayer. May participate in the regulation of osmotic pressure changes within the cell. The chain is Large-conductance mechanosensitive channel from Nitratidesulfovibrio vulgaris (strain DSM 19637 / Miyazaki F) (Desulfovibrio vulgaris).